The chain runs to 736 residues: 1,4-alpha-glucan branching enzyme GlgB (736 aa).

The Nucleophile role is filled by Asp-419. Catalysis depends on Glu-472, which acts as the Proton donor.

This sequence belongs to the glycosyl hydrolase 13 family. GlgB subfamily. Monomer.

It carries out the reaction Transfers a segment of a (1-&gt;4)-alpha-D-glucan chain to a primary hydroxy group in a similar glucan chain.. It participates in glycan biosynthesis; glycogen biosynthesis. Catalyzes the formation of the alpha-1,6-glucosidic linkages in glycogen by scission of a 1,4-alpha-linked oligosaccharide from growing alpha-1,4-glucan chains and the subsequent attachment of the oligosaccharide to the alpha-1,6 position. In Rhizobium meliloti (strain 1021) (Ensifer meliloti), this protein is 1,4-alpha-glucan branching enzyme GlgB.